The following is a 92-amino-acid chain: Small ribosomal subunit protein uS19 (92 aa).

It belongs to the universal ribosomal protein uS19 family.

Its function is as follows. Protein S19 forms a complex with S13 that binds strongly to the 16S ribosomal RNA. The chain is Small ribosomal subunit protein uS19 from Thermobifida fusca (strain YX).